The following is a 347-amino-acid chain: Selenide, water dikinase (347 aa).

Cys17 is a catalytic residue. ATP-binding positions include Lys20 and 48–50; that span reads TRD. Asp51 contributes to the Mg(2+) binding site. ATP is bound by residues Asp68, Asp91, and 139 to 141; that span reads GHS. A Mg(2+)-binding site is contributed by Asp91. Residue Asp227 coordinates Mg(2+).

The protein belongs to the selenophosphate synthase 1 family. Class I subfamily. In terms of assembly, homodimer. Mg(2+) serves as cofactor.

The enzyme catalyses hydrogenselenide + ATP + H2O = selenophosphate + AMP + phosphate + 2 H(+). Its function is as follows. Synthesizes selenophosphate from selenide and ATP. In Shigella flexneri serotype 5b (strain 8401), this protein is Selenide, water dikinase.